We begin with the raw amino-acid sequence, 284 residues long: MLIVETVPILRREIRRWRQEGKRIALVPTMGNLHDGHMTLVDTAKGQADIVIVSIFVNPMQFNRPDDLAKYPRTLQEDCEKLHQHGVNLVFAPADKEIYPDGMEHQTYVDVPELSTMLEGASRPGHFRGVSTVVSKLFNLVQPDLTYFGEKDFQQLQLIRKMIADLAYDITLVSVPTVRDQNGLALSSRNNNLTADEHRIAPELSKIMRSIAEKMAQGERHTEQLLTQASSQLHEAGFVPDELFIRDAETLAPLNTESKKAVILMAAWLGQTRMIDNQQVDLTQ.

Position 30–37 (30–37) interacts with ATP; that stretch reads MGNLHDGH. Histidine 37 serves as the catalytic Proton donor. Position 61 (glutamine 61) interacts with (R)-pantoate. A beta-alanine-binding site is contributed by glutamine 61. 149–152 lines the ATP pocket; it reads GEKD. Glutamine 155 serves as a coordination point for (R)-pantoate. ATP is bound by residues valine 178 and 186–189; that span reads LSSR.

It belongs to the pantothenate synthetase family. Homodimer.

Its subcellular location is the cytoplasm. It catalyses the reaction (R)-pantoate + beta-alanine + ATP = (R)-pantothenate + AMP + diphosphate + H(+). It participates in cofactor biosynthesis; (R)-pantothenate biosynthesis; (R)-pantothenate from (R)-pantoate and beta-alanine: step 1/1. Catalyzes the condensation of pantoate with beta-alanine in an ATP-dependent reaction via a pantoyl-adenylate intermediate. The sequence is that of Pantothenate synthetase from Photorhabdus laumondii subsp. laumondii (strain DSM 15139 / CIP 105565 / TT01) (Photorhabdus luminescens subsp. laumondii).